Reading from the N-terminus, the 220-residue chain is MKLNKYIDHTILKPETTQEQVEKILAEAKEYDFASVCVNPTWVALAAESLKDSDVKVCTVIGFPLGANTPAVKAFETKDAISNGADEIDVVINIGALKTGNYDLVLEDIKAVVAASGDKLVKVIIEACLLTDDEKVKACQLSQEAGADYVKTSTGFSTGGATVADVALMRKTVGPDMGVKASGGARSYEDAIAFIEAGASRIGASSGVAIMNGAQADGDY.

Residue Asp89 is the Proton donor/acceptor of the active site. Lys151 acts as the Schiff-base intermediate with acetaldehyde in catalysis. Lys180 (proton donor/acceptor) is an active-site residue.

It belongs to the DeoC/FbaB aldolase family. DeoC type 1 subfamily.

Its subcellular location is the cytoplasm. It carries out the reaction 2-deoxy-D-ribose 5-phosphate = D-glyceraldehyde 3-phosphate + acetaldehyde. It functions in the pathway carbohydrate degradation; 2-deoxy-D-ribose 1-phosphate degradation; D-glyceraldehyde 3-phosphate and acetaldehyde from 2-deoxy-alpha-D-ribose 1-phosphate: step 2/2. Its function is as follows. Catalyzes a reversible aldol reaction between acetaldehyde and D-glyceraldehyde 3-phosphate to generate 2-deoxy-D-ribose 5-phosphate. In Streptococcus suis (strain 98HAH33), this protein is Deoxyribose-phosphate aldolase.